The primary structure comprises 742 residues: Collectin-12 (742 aa).

The Cytoplasmic portion of the chain corresponds to Met-1–Lys-37. The chain crosses the membrane as a helical; Signal-anchor for type II membrane protein span at residues Phe-38–Gly-58. Over Tyr-59–Leu-742 the chain is Extracellular. The N-linked (GlcNAc...) asparagine glycan is linked to Asn-67. Positions Glu-73–Ala-141 form a coiled coil. 3 N-linked (GlcNAc...) asparagine glycosylation sites follow: Asn-159, Asn-168, and Asn-271. A coiled-coil region spans residues Gln-215–Lys-328. Positions Thr-439–Pro-608 are disordered. Collagen-like domains lie at Gly-443–Lys-472, Gly-473–Pro-529, and Gly-530–Val-589. Composition is skewed to low complexity over residues Lys-502–Asp-525 and Lys-534–Pro-556. A compositionally biased stretch (pro residues) spans Pro-571–Pro-585. 3 disulfide bridges follow: Cys-607-Cys-618, Cys-635-Cys-730, and Cys-708-Cys-722. The region spanning Phe-614–Glu-731 is the C-type lectin domain. Ca(2+)-binding residues include Phe-644, Asn-646, Glu-650, Asp-670, and Glu-674. The a carbohydrate site is built by Lys-691, Gln-694, and Asp-696. Ca(2+) is bound by residues Gln-694, Asp-696, Asn-697, Glu-706, Asp-707, Asn-718, Asp-719, and Glu-731. Glu-706 serves as a coordination point for a carbohydrate. Residues Asn-718 and Asp-719 each contribute to the a carbohydrate site.

The extracellular domain forms a stable trimer. The extracellular domain interacts with fibrillar amyloid-beta peptide. As to expression, expressed in perivascular macrophages. Expressed in plaques-surrounding reactive astrocytes and in perivascular astrocytes associated with cerebral amyloid angiopathy (CAA) in the temporal cortex of Alzheimer patient (at protein level). Strongly expressed in placenta. Moderately expressed in heart, skeletal muscle, small intestine and lung. Weakly expressed in brain, colon, thymus and kidney. Expressed in nurse-like cells. Expressed in reactive astrocytes and vascular/perivascular cells in the brain of Alzheimer patient.

It localises to the membrane. Functionally, scavenger receptor that displays several functions associated with host defense. Promotes binding and phagocytosis of Gram-positive, Gram-negative bacteria and yeast. Mediates the recognition, internalization and degradation of oxidatively modified low density lipoprotein (oxLDL) by vascular endothelial cells. Binds to several carbohydrates including Gal-type ligands, D-galactose, L- and D-fucose, GalNAc, T and Tn antigens in a calcium-dependent manner and internalizes specifically GalNAc in nurse-like cells. Also binds to sialyl Lewis X or a trisaccharide and asialo-orosomucoid (ASOR). May also play a role in the clearance of amyloid-beta in Alzheimer disease. The sequence is that of Collectin-12 (COLEC12) from Homo sapiens (Human).